Reading from the N-terminus, the 152-residue chain is UPF0225 protein KPK_2103 (152 aa).

It belongs to the UPF0225 family.

The chain is UPF0225 protein KPK_2103 from Klebsiella pneumoniae (strain 342).